The sequence spans 119 residues: Large ribosomal subunit protein bL20 (119 aa).

It belongs to the bacterial ribosomal protein bL20 family.

In terms of biological role, binds directly to 23S ribosomal RNA and is necessary for the in vitro assembly process of the 50S ribosomal subunit. It is not involved in the protein synthesizing functions of that subunit. The polypeptide is Large ribosomal subunit protein bL20 (Delftia acidovorans (strain DSM 14801 / SPH-1)).